We begin with the raw amino-acid sequence, 127 residues long: Aspartate 1-decarboxylase (127 aa).

S25 acts as the Schiff-base intermediate with substrate; via pyruvic acid in catalysis. Position 25 is a pyruvic acid (Ser) (S25). Substrate is bound at residue T57. Residue Y58 is the Proton donor of the active site. 73–75 (GAA) lines the substrate pocket.

This sequence belongs to the PanD family. Heterooctamer of four alpha and four beta subunits. It depends on pyruvate as a cofactor. Post-translationally, is synthesized initially as an inactive proenzyme, which is activated by self-cleavage at a specific serine bond to produce a beta-subunit with a hydroxyl group at its C-terminus and an alpha-subunit with a pyruvoyl group at its N-terminus.

It localises to the cytoplasm. The enzyme catalyses L-aspartate + H(+) = beta-alanine + CO2. Its pathway is cofactor biosynthesis; (R)-pantothenate biosynthesis; beta-alanine from L-aspartate: step 1/1. Functionally, catalyzes the pyruvoyl-dependent decarboxylation of aspartate to produce beta-alanine. This Bacillus velezensis (strain DSM 23117 / BGSC 10A6 / LMG 26770 / FZB42) (Bacillus amyloliquefaciens subsp. plantarum) protein is Aspartate 1-decarboxylase.